The following is a 422-amino-acid chain: Enolase (422 aa).

Q161 contributes to the (2R)-2-phosphoglycerate binding site. E203 acts as the Proton donor in catalysis. Residues D240, E283, and D310 each contribute to the Mg(2+) site. (2R)-2-phosphoglycerate-binding residues include K335, R364, S365, and K386. K335 (proton acceptor) is an active-site residue.

This sequence belongs to the enolase family. The cofactor is Mg(2+).

The protein resides in the cytoplasm. It localises to the secreted. It is found in the cell surface. The enzyme catalyses (2R)-2-phosphoglycerate = phosphoenolpyruvate + H2O. The protein operates within carbohydrate degradation; glycolysis; pyruvate from D-glyceraldehyde 3-phosphate: step 4/5. Its function is as follows. Catalyzes the reversible conversion of 2-phosphoglycerate (2-PG) into phosphoenolpyruvate (PEP). It is essential for the degradation of carbohydrates via glycolysis. The sequence is that of Enolase from Deinococcus radiodurans (strain ATCC 13939 / DSM 20539 / JCM 16871 / CCUG 27074 / LMG 4051 / NBRC 15346 / NCIMB 9279 / VKM B-1422 / R1).